Here is a 134-residue protein sequence, read N- to C-terminus: Large ribosomal subunit protein bL17 (134 aa).

It belongs to the bacterial ribosomal protein bL17 family. In terms of assembly, part of the 50S ribosomal subunit. Contacts protein L32.

The chain is Large ribosomal subunit protein bL17 from Aromatoleum aromaticum (strain DSM 19018 / LMG 30748 / EbN1) (Azoarcus sp. (strain EbN1)).